A 242-amino-acid polypeptide reads, in one-letter code: Biosynthetic peptidoglycan transglycosylase (242 aa).

Residues 19-39 traverse the membrane as a helical segment; that stretch reads LMVVLAVFWGGGIALFSVAPV.

This sequence belongs to the glycosyltransferase 51 family.

Its subcellular location is the cell inner membrane. The catalysed reaction is [GlcNAc-(1-&gt;4)-Mur2Ac(oyl-L-Ala-gamma-D-Glu-L-Lys-D-Ala-D-Ala)](n)-di-trans,octa-cis-undecaprenyl diphosphate + beta-D-GlcNAc-(1-&gt;4)-Mur2Ac(oyl-L-Ala-gamma-D-Glu-L-Lys-D-Ala-D-Ala)-di-trans,octa-cis-undecaprenyl diphosphate = [GlcNAc-(1-&gt;4)-Mur2Ac(oyl-L-Ala-gamma-D-Glu-L-Lys-D-Ala-D-Ala)](n+1)-di-trans,octa-cis-undecaprenyl diphosphate + di-trans,octa-cis-undecaprenyl diphosphate + H(+). It functions in the pathway cell wall biogenesis; peptidoglycan biosynthesis. In terms of biological role, peptidoglycan polymerase that catalyzes glycan chain elongation from lipid-linked precursors. This chain is Biosynthetic peptidoglycan transglycosylase, found in Escherichia coli O157:H7.